A 44-amino-acid chain; its full sequence is uncharacterized protein (44 aa).

Positions 1–16 (MRISLLAVILALLFVA) are cleaved as a signal peptide.

This is an uncharacterized protein from Helicobacter pylori (strain ATCC 700392 / 26695) (Campylobacter pylori).